Reading from the N-terminus, the 691-residue chain is Calcium-binding and coiled-coil domain-containing protein 1 (691 aa).

The segment at 1–30 (MEESPLSRAPSRGGVNFLNVARTYIPNTKV) is p300 KIX-binding. The N-terminal AD (CTNNB1 binding site) stretch occupies residues 1 to 190 (MEESPLSRAP…VQELERALAT (190 aa)). S4 is modified (phosphoserine). The interval 45–125 (SDWIGIFKVE…FQFREPRPMD (81 aa)) is interaction with GATA1. Coiled-coil stretches lie at residues 145–205 (KATV…YKGI), 232–339 (ELED…AELE), and 417–514 (QSVE…ADEK). Residues 501-691 (RKLEARLEKV…FSTQDPFTFE (191 aa)) form a C-terminal AD (CTNNB1 binding site); interaction with CCAR1 region. A disordered region spans residues 514–606 (KWNEDATTED…SEAEDEKSVL (93 aa)). Residues 653-679 (WKECPICKERFPAESDKDALEDHMDGH) form a UBZ1-type zinc finger. Residues C656, C659, H675, and H679 each contribute to the Zn(2+) site.

This sequence belongs to the CALCOCO family. In terms of assembly, part of a calphoglin complex consisting of CALCOCO1, PPA1 and PGM. Interacts with the bHLH-PAS domains of GRIP1, AHR and ARNT. Interacts with CTNNB1 via both its N- and C-terminal regions. Interacts with EP300. Interacts with CCAR1 (via N-terminus) and GATA1.

The protein localises to the cytoplasm. It localises to the nucleus. Functionally, functions as a coactivator for aryl hydrocarbon and nuclear receptors (NR). Recruited to promoters through its contact with the N-terminal basic helix-loop-helix-Per-Arnt-Sim (PAS) domain of transcription factors or coactivators, such as NCOA2. During ER-activation acts synergistically in combination with other NCOA2-binding proteins, such as EP300, CREBBP and CARM1. Involved in the transcriptional activation of target genes in the Wnt/CTNNB1 pathway. Functions as a secondary coactivator in LEF1-mediated transcriptional activation via its interaction with CTNNB1. Coactivator function for nuclear receptors and LEF1/CTNNB1 involves differential utilization of two different activation regions. In association with CCAR1 enhances GATA1- and MED1-mediated transcriptional activation from the gamma-globin promoter during erythroid differentiation of K562 erythroleukemia cells. Seems to enhance inorganic pyrophosphatase thus activating phosphogluomutase (PMG). Probably functions as a component of the calphoglin complex, which is involved in linking cellular metabolism (phosphate and glucose metabolism) with other core functions including protein synthesis and degradation, calcium signaling and cell growth. This Homo sapiens (Human) protein is Calcium-binding and coiled-coil domain-containing protein 1 (CALCOCO1).